The following is a 208-amino-acid chain: Small ribosomal subunit protein uS4 (208 aa).

An S4 RNA-binding domain is found at 98 to 160; sequence CRLDNVVYRM…AKKQSRIQLA (63 aa).

Belongs to the universal ribosomal protein uS4 family. In terms of assembly, part of the 30S ribosomal subunit. Contacts protein S5. The interaction surface between S4 and S5 is involved in control of translational fidelity.

Its function is as follows. One of the primary rRNA binding proteins, it binds directly to 16S rRNA where it nucleates assembly of the body of the 30S subunit. With S5 and S12 plays an important role in translational accuracy. The protein is Small ribosomal subunit protein uS4 of Vesicomyosocius okutanii subsp. Calyptogena okutanii (strain HA).